Reading from the N-terminus, the 148-residue chain is Transcription antitermination protein NusB (148 aa).

It belongs to the NusB family.

Its function is as follows. Involved in transcription antitermination. Required for transcription of ribosomal RNA (rRNA) genes. Binds specifically to the boxA antiterminator sequence of the ribosomal RNA (rrn) operons. This chain is Transcription antitermination protein NusB, found in Aquifex aeolicus (strain VF5).